Reading from the N-terminus, the 260-residue chain is Thiazole synthase (260 aa).

The Schiff-base intermediate with DXP role is filled by lysine 96. Residues glycine 157, 184–185 (AG), and 206–207 (NT) contribute to the 1-deoxy-D-xylulose 5-phosphate site.

This sequence belongs to the ThiG family. As to quaternary structure, homotetramer. Forms heterodimers with either ThiH or ThiS.

The protein resides in the cytoplasm. It carries out the reaction [ThiS sulfur-carrier protein]-C-terminal-Gly-aminoethanethioate + 2-iminoacetate + 1-deoxy-D-xylulose 5-phosphate = [ThiS sulfur-carrier protein]-C-terminal Gly-Gly + 2-[(2R,5Z)-2-carboxy-4-methylthiazol-5(2H)-ylidene]ethyl phosphate + 2 H2O + H(+). The protein operates within cofactor biosynthesis; thiamine diphosphate biosynthesis. In terms of biological role, catalyzes the rearrangement of 1-deoxy-D-xylulose 5-phosphate (DXP) to produce the thiazole phosphate moiety of thiamine. Sulfur is provided by the thiocarboxylate moiety of the carrier protein ThiS. In vitro, sulfur can be provided by H(2)S. This Bradyrhizobium sp. (strain BTAi1 / ATCC BAA-1182) protein is Thiazole synthase.